The primary structure comprises 958 residues: Atromentin synthetase greA (958 aa).

The segment at 60–465 (SIQTKTFSAF…SGRIKDTVIV (406 aa)) is adenylation (A) domain. The 79-residue stretch at 597 to 675 (APSTETEKAL…SLANYVNALL (79 aa)) folds into the Carrier domain. Residues 602-672 (TEKALAKIYA…VVSSLANYVN (71 aa)) form a thiolation and peptide carrier (T) domain region. An O-(pantetheine 4'-phosphoryl)serine modification is found at Ser-634. The tract at residues 698-946 (PIFFVHPGVG…MDFDHVPQFQ (249 aa)) is thioesterase (TE) domain.

This sequence belongs to the ATP-dependent AMP-binding enzyme family.

It participates in secondary metabolite biosynthesis. Functionally, an L-tyrosine:2-oxoglutarate aminotransferase and atromentin synthetase greA catalyze consecutive steps to turn over L-tyrosine into atromentin, which represents the generic precursor molecule for the entire terphenylquinone and pulvinic acid family of pigments, which are widely distributed secondary metabolites in homobasidiomycetes. The first step catalyzed by the aminotransferase converts L-tyrosine in to 4-hydroxyphenylpyruvate (4-HPP). Adenylation of two 4-HPP monomers by the greA adenylation (A) domain, covalent tethering of the monomers as a thioester and oxoester onto the greA thiolation (T) and thioesterase (TE) domains, respectively, and symmetric C-C-bond formation between two monomers catalyzed by the greA TE domain leads to atromentin. In Suillus grevillei (Larch bolete), this protein is Atromentin synthetase greA (greA).